Reading from the N-terminus, the 91-residue chain is Large ribosomal subunit protein uL23 (91 aa).

It belongs to the universal ribosomal protein uL23 family. As to quaternary structure, part of the 50S ribosomal subunit. Contacts protein L29, and trigger factor when it is bound to the ribosome.

Functionally, one of the early assembly proteins it binds 23S rRNA. One of the proteins that surrounds the polypeptide exit tunnel on the outside of the ribosome. Forms the main docking site for trigger factor binding to the ribosome. This is Large ribosomal subunit protein uL23 from Staphylococcus aureus (strain USA300).